A 375-amino-acid chain; its full sequence is Probable protein-glutamate methylesterase BB_0415 (375 aa).

One can recognise a Response regulatory domain in the interval 6 to 120 (SVLIIEYFAV…SHEIKKEQII (115 aa)). The 193-residue stretch at 183-375 (KLRKFDIIAI…KLLKAILINS (193 aa)) folds into the CheB-type methylesterase domain. Catalysis depends on residues serine 195, histidine 221, and aspartate 317.

It catalyses the reaction [protein]-L-glutamate 5-O-methyl ester + H2O = L-glutamyl-[protein] + methanol + H(+). In Borreliella burgdorferi (strain ATCC 35210 / DSM 4680 / CIP 102532 / B31) (Borrelia burgdorferi), this protein is Probable protein-glutamate methylesterase BB_0415.